We begin with the raw amino-acid sequence, 84 residues long: Turripeptide IX-01 (84 aa).

An N-terminal signal peptide occupies residues 1-21; the sequence is MGFYMLLTVALLLTSFMSVEA. Residues 22–39 constitute a propeptide that is removed on maturation; that stretch reads TPVDQAERSAMKESGLAH. Cystine bridges form between Cys48–Cys70, Cys55–Cys74, and Cys60–Cys81.

Expressed by the venom duct.

It localises to the secreted. The chain is Turripeptide IX-01 from Gemmula speciosa (Splendid gem-turris).